Reading from the N-terminus, the 336-residue chain is Biotin synthase (336 aa).

In terms of domain architecture, Radical SAM core spans 54-281 (NAIQLSTLLS…KAMVRLSAGR (228 aa)). Residues cysteine 69, cysteine 73, and cysteine 76 each coordinate [4Fe-4S] cluster. [2Fe-2S] cluster is bound by residues cysteine 113, cysteine 144, cysteine 204, and arginine 276.

It belongs to the radical SAM superfamily. Biotin synthase family. In terms of assembly, homodimer. It depends on [4Fe-4S] cluster as a cofactor. The cofactor is [2Fe-2S] cluster.

The catalysed reaction is (4R,5S)-dethiobiotin + (sulfur carrier)-SH + 2 reduced [2Fe-2S]-[ferredoxin] + 2 S-adenosyl-L-methionine = (sulfur carrier)-H + biotin + 2 5'-deoxyadenosine + 2 L-methionine + 2 oxidized [2Fe-2S]-[ferredoxin]. Its pathway is cofactor biosynthesis; biotin biosynthesis; biotin from 7,8-diaminononanoate: step 2/2. Functionally, catalyzes the conversion of dethiobiotin (DTB) to biotin by the insertion of a sulfur atom into dethiobiotin via a radical-based mechanism. This chain is Biotin synthase, found in Burkholderia pseudomallei (strain 1710b).